A 1494-amino-acid polypeptide reads, in one-letter code: Methyl-CpG-binding domain protein 5 (1494 aa).

The MBD domain occupies 11-81 (DKEGGLPAIQ…KVFNFDPGAA (71 aa)). The tract at residues 57 to 68 (DGTCKCGLECPL) is required for interaction with ASXL1/2/3. 8 disordered regions span residues 123-152 (LVLT…RNKS), 200-274 (RQRL…TPLS), 329-350 (HHKP…QKKP), 450-522 (IGRI…KDIP), 594-641 (LAGN…QSGR), 809-848 (PNPP…SSSI), 1154-1173 (HDGR…LDHG), and 1345-1375 (VNGC…SNEL). The span at 333-343 (PQGPPPPPPPS) shows a compositional bias: pro residues. Low complexity-rich tracts occupy residues 499–511 (SPRP…PSTK) and 594–612 (LAGN…AGSG). Polar residues-rich tracts occupy residues 614–624 (TEGHSTLNTMF) and 813–835 (QSRI…YNQT). Residues 836–848 (SSEAGGSGPSSSI) show a composition bias toward low complexity. A PWWP domain is found at 1385-1409 (VGDLVWGQIKGLTSWPGKLVREDDV). The tract at residues 1468–1494 (MSGTVHQIPQGDRQMRPPKPKRRKISR) is disordered. Basic residues predominate over residues 1483–1494 (RPPKPKRRKISR).

Core component of the polycomb repressive deubiquitinase (PR-DUB) complex, at least composed of BAP1, one of ASXL1, ASXL2 or (probably) ASXL3, and one of MBD5 or MBD6. Distinct combinations of ASXL and MBD proteins may preferentially bind specific histone modification marks. The PR-DUB core associates with a number of accessory proteins, including FOXK1, FOXK2, KDM1B, HCFC1 and OGT; KDM1B specifically associates with ASXL2 PR-DUB complexes. Interacts (via MBD domain) with ASXL1, ASXL2 and ASXL3 (via PHD domain); the interaction is probably direct, mediates association with other PR-DUB complex core components. Detected in heart, placenta, liver, skeletal muscle, kidney and pancreas.

It localises to the nucleus. The protein localises to the chromosome. Functionally, non-catalytic component of the polycomb repressive deubiquitinase (PR-DUB) complex, a complex that specifically mediates deubiquitination of histone H2A monoubiquitinated at 'Lys-120' (H2AK119ub1). Important for stability of PR-DUB components and stimulating its ubiquitinase activity. As part of the PR-DUB complex, associates with chromatin enriched in histone marks H3K4me1, H3K4me3, and H3K27Ac, but not in H3K27me3. The PR-DUB complex is an epigenetic regulator of gene expression, including genes involved in cell growth and survivability. MBD5 and MBD6 containing complexes associate with distinct chromatin regions enriched in genes involved in different pathways. Heterochromatin recruitment is not mediated by DNA methylation. The PR-DUB complex is an epigenetic regulator of gene expression, including genes involved in development, cell communication, signaling, cell proliferation and cell viability. The chain is Methyl-CpG-binding domain protein 5 (MBD5) from Homo sapiens (Human).